A 238-amino-acid chain; its full sequence is tRNA (guanine-N(7)-)-methyltransferase (238 aa).

Residues Glu-68, Glu-93, Asp-121, and Asp-143 each coordinate S-adenosyl-L-methionine. Asp-143 is a catalytic residue. Residues Lys-147, Asp-179, and Thr-216–Glu-219 contribute to the substrate site.

This sequence belongs to the class I-like SAM-binding methyltransferase superfamily. TrmB family.

It catalyses the reaction guanosine(46) in tRNA + S-adenosyl-L-methionine = N(7)-methylguanosine(46) in tRNA + S-adenosyl-L-homocysteine. The protein operates within tRNA modification; N(7)-methylguanine-tRNA biosynthesis. Functionally, catalyzes the formation of N(7)-methylguanine at position 46 (m7G46) in tRNA. This Paramagnetospirillum magneticum (strain ATCC 700264 / AMB-1) (Magnetospirillum magneticum) protein is tRNA (guanine-N(7)-)-methyltransferase.